The primary structure comprises 341 residues: Chorismate synthase (341 aa).

Disordered regions lie at residues Leu45–Glu64 and His109–Thr134. An NADP(+)-binding site is contributed by Arg48. FMN contacts are provided by residues Arg128 to Ser130, Gly280, Lys295 to Ser299, and Arg308.

The protein belongs to the chorismate synthase family. As to quaternary structure, homotetramer. It depends on FMNH2 as a cofactor.

It catalyses the reaction 5-O-(1-carboxyvinyl)-3-phosphoshikimate = chorismate + phosphate. The protein operates within metabolic intermediate biosynthesis; chorismate biosynthesis; chorismate from D-erythrose 4-phosphate and phosphoenolpyruvate: step 7/7. Its function is as follows. Catalyzes the anti-1,4-elimination of the C-3 phosphate and the C-6 proR hydrogen from 5-enolpyruvylshikimate-3-phosphate (EPSP) to yield chorismate, which is the branch point compound that serves as the starting substrate for the three terminal pathways of aromatic amino acid biosynthesis. This reaction introduces a second double bond into the aromatic ring system. This is Chorismate synthase from Bdellovibrio bacteriovorus (strain ATCC 15356 / DSM 50701 / NCIMB 9529 / HD100).